The sequence spans 223 residues: Protein disulfide-isomerase-like protein EhSep2 (223 aa).

The signal sequence occupies residues 1–17 (MALRSLTLLCAAAGASA). The Thioredoxin domain occupies 18–125 (GAIELTPDNF…DELKKFAENE (108 aa)). Residue Sec-47 is a non-standard amino acid, selenocysteine. Positions 155–201 (EKRTEMLETLKKELADAESTHEALLKELQATYKESMDKLEKLKEESA) form a coiled coil. A disordered region spans residues 201 to 223 (APKIKLLKAATPAPKAEGAKDEV). A compositionally biased stretch (low complexity) spans 203-216 (KIKLLKAATPAPKA). The Prevents secretion from ER motif lies at 220 to 223 (KDEV).

The protein belongs to the protein disulfide isomerase family.

Its subcellular location is the endoplasmic reticulum lumen. This is Protein disulfide-isomerase-like protein EhSep2 (SEP2) from Emiliania huxleyi (Coccolithophore).